The sequence spans 249 residues: MKLVQDKITIITGGTRGIGFAAAKLFIENGAKVSIFGETQEEVDTALAQLKELYPEEEVLGFAPDLTSRDAVMAAVGTVAQKYGRLDVMINNAGITMNSVFSRVSEEDFKNIMDINVNGVFNGAWSAYQCMKDAKQGVIINTASVTGIYGSLSGIGYPTSKAGVIGLTHGLGREIIRKNIRVVGVAPGVVDTDMTKGLPPEILEDYLKTLPMKRMLKPEEIANVYLFLASDLASGITATTISVDGAYRP.

Residues 15–18 (TRGI), Glu-38, Glu-42, and Asn-92 contribute to the NAD(+) site. Position 144 (Ser-144) interacts with substrate. Catalysis depends on proton donor/acceptor residues Tyr-157 and Lys-161. NAD(+)-binding positions include Lys-161 and 190-192 (VDT).

It belongs to the short-chain dehydrogenases/reductases (SDR) family. As to quaternary structure, homotetramer.

It carries out the reaction a 3alpha-hydroxy bile acid CoA + NAD(+) = a 3-oxo bile acid CoA + NADH + H(+). It catalyses the reaction choloyl-CoA + NAD(+) = 7alpha,12alpha-dihydroxy-3-oxochol-24-oyl-CoA + NADH + H(+). The enzyme catalyses chenodeoxycholoyl-CoA + NAD(+) = 7alpha-hydroxy-3-oxochol-24-oyl-CoA + NADH + H(+). The catalysed reaction is deoxycholoyl-CoA + NAD(+) = 12alpha-hydroxy-3-oxocholan-24-oyl-CoA + NADH + H(+). It carries out the reaction lithocholoyl-CoA + NAD(+) = 3-oxocholan-24-oyl-CoA + NADH + H(+). It functions in the pathway lipid metabolism; bile acid biosynthesis. Involved in the multi-step bile acid 7alpha-dehydroxylation pathway that transforms primary bile acids to secondary bile acids in the human gut. Catalyzes the oxidation of C3-hydroxyl group of CoA conjugated bile acids generating a C3-oxo bile acid intermediate. Can use choloyl-CoA, chenodeoxycholoyl-CoA, deoxycholoyl-CoA, and lithocholoyl-CoA as substrates with similar efficiency. Highly prefers NAD over NADP as cosubstrate. Also catalyzes the reverse reactions; in vitro, the preferred direction of reaction depends on the pH. Has very little activity with unconjugated (non-CoA) bile acid substrates. The chain is 3alpha-hydroxy bile acid-CoA-ester 3-dehydrogenase 1/3 (baiA1) from Clostridium scindens (strain JCM 10418 / VPI 12708).